The primary structure comprises 68 residues: Copper transport protein ATOX1 (68 aa).

Residues 1 to 63 (MPKHEFSVDM…TLNKTGKAVS (63 aa)) enclose the HMA domain. Cu cation-binding residues include Cys-12 and Cys-15. Ser-47 is modified (phosphoserine). Lys-60 carries the post-translational modification N6-acetyllysine.

Belongs to the ATX1 family. Homodimer. Interacts with ATP7B. Interacts with ATP7A. Interacts (via dimer form) with SLC31A1 (via C-terminal domain); this interaction improves ATOX1 stability and controls intracellular Cu(I) levels.

Its function is as follows. Binds and deliver cytosolic copper to the copper ATPase proteins. May be important in cellular antioxidant defense. The sequence is that of Copper transport protein ATOX1 from Rattus norvegicus (Rat).